A 196-amino-acid chain; its full sequence is T-cell surface glycoprotein CD3 epsilon chain (196 aa).

The signal sequence occupies residues 1-21; the sequence is MPSGNLWKVLGLCLLSVGAWG. Topologically, residues 22 to 116 are extracellular; that stretch reads QEDIERPDED…VCENCVEVDL (95 aa). An Ig-like domain is found at 28–102; it reads PDEDTQKTFK…VGEKTSHRLY (75 aa). Cys49 and Cys91 are oxidised to a cystine. Residues 117 to 137 traverse the membrane as a helical segment; the sequence is MAVVTIIVVDICITLGLLMVV. Topologically, residues 138-196 are cytoplasmic; it reads YYYSKSRKAKAMPVTRGAGAGGRPRGQNRERPPPVPNPDYEPIRKGQRDLYSGLNQRGR. The segment at 150-196 is disordered; the sequence is PVTRGAGAGGRPRGQNRERPPPVPNPDYEPIRKGQRDLYSGLNQRGR. The interval 164 to 181 is NUMB-binding region; the sequence is QNRERPPPVPNPDYEPIR. One can recognise an ITAM domain in the interval 167–194; the sequence is ERPPPVPNPDYEPIRKGQRDLYSGLNQR. Residues 168 to 175 are proline-rich sequence; the sequence is RPPPVPNP. A phosphotyrosine mark is found at Tyr177 and Tyr188.

The TCR-CD3 complex is composed of a CD3D/CD3E and a CD3G/CD3E heterodimers that preferentially associate with TCRalpha and TCRbeta, respectively, to form TCRalpha/CD3E/CD3G and TCRbeta/CD3G/CD3E trimers. In turn, the hexamer interacts with CD3Z homodimer to form the TCR-CD3 complex. Alternatively, TCRalpha and TCRbeta can be replaced by TCRgamma and TCRdelta. Interacts with CD6. Interacts (via Proline-rich sequence) with NCK1; the interaction is ligand dependent but independent of tyrosine kinase activation. Phosphorylated on Tyr residues after T-cell receptor triggering by LCK in association with CD4/CD8.

The protein resides in the cell membrane. Part of the TCR-CD3 complex present on T-lymphocyte cell surface that plays an essential role in adaptive immune response. When antigen presenting cells (APCs) activate T-cell receptor (TCR), TCR-mediated signals are transmitted across the cell membrane by the CD3 chains CD3D, CD3E, CD3G and CD3Z. All CD3 chains contain immunoreceptor tyrosine-based activation motifs (ITAMs) in their cytoplasmic domain. Upon TCR engagement, these motifs become phosphorylated by Src family protein tyrosine kinases LCK and FYN, resulting in the activation of downstream signaling pathways. In addition of this role of signal transduction in T-cell activation, CD3E plays an essential role in correct T-cell development. Also participates in internalization and cell surface down-regulation of TCR-CD3 complexes via endocytosis sequences present in CD3E cytosolic region. In addition to its role as a TCR coreceptor, it serves as a receptor for ITPRIPL1. Ligand recognition inhibits T-cell activation by promoting interaction with NCK1, which prevents CD3E-ZAP70 interaction and blocks the ERK-NFkB signaling cascade and calcium influx. This Sus scrofa (Pig) protein is T-cell surface glycoprotein CD3 epsilon chain (CD3E).